The primary structure comprises 87 residues: Small ribosomal subunit protein eS21 (87 aa).

Belongs to the eukaryotic ribosomal protein eS21 family. Component of the small ribosomal subunit. Mature ribosomes consist of a small (40S) and a large (60S) subunit. The 40S subunit contains about 33 different proteins and 1 molecule of RNA (18S). The 60S subunit contains about 49 different proteins and 3 molecules of RNA (25S, 5.8S and 5S).

The protein localises to the cytoplasm. In terms of biological role, required for the processing of the 20S rRNA-precursor to mature 18S rRNA in a late step of the maturation of 40S ribosomal subunits. Has a physiological role leading to 18S rRNA stability. The chain is Small ribosomal subunit protein eS21 (RPS21) from Candida glabrata (strain ATCC 2001 / BCRC 20586 / JCM 3761 / NBRC 0622 / NRRL Y-65 / CBS 138) (Yeast).